A 324-amino-acid polypeptide reads, in one-letter code: Membrane protein UL8 (324 aa).

Residues 36–138 (ILESIIYVSG…LWYNLTVKPK (103 aa)) are immunoglobulin V-like domain. A helical membrane pass occupies residues 278-298 (THYSWMLIIAIILIIFIIICL).

The protein belongs to the RL11 family. Highly glycosylated.

Its subcellular location is the host cell membrane. Functionally, plays a role in the inhibition of pro-inflammatory cytokine production. This effect is mediated by the conserved Ig-like domain. The protein is Membrane protein UL8 (UL8) of Homo sapiens (Human).